We begin with the raw amino-acid sequence, 101 residues long: Small ribosomal subunit protein uS14 (101 aa).

A disordered region spans residues 1–21 (MAKVSLIKKNESRKKKSQSLH). Positions 11-21 (ESRKKKSQSLH) are enriched in basic residues.

This sequence belongs to the universal ribosomal protein uS14 family. Part of the 30S ribosomal subunit. Contacts proteins S3 and S10.

In terms of biological role, binds 16S rRNA, required for the assembly of 30S particles and may also be responsible for determining the conformation of the 16S rRNA at the A site. The polypeptide is Small ribosomal subunit protein uS14 (Rickettsia canadensis (strain McKiel)).